Consider the following 476-residue polypeptide: Glutamate--tRNA ligase 1 (476 aa).

The 'HIGH' region signature appears at P9–G19. The short motif at K238–R242 is the 'KMSKS' region element. K241 is a binding site for ATP.

This sequence belongs to the class-I aminoacyl-tRNA synthetase family. Glutamate--tRNA ligase type 1 subfamily. In terms of assembly, monomer.

It is found in the cytoplasm. The enzyme catalyses tRNA(Glu) + L-glutamate + ATP = L-glutamyl-tRNA(Glu) + AMP + diphosphate. In terms of biological role, catalyzes the attachment of glutamate to tRNA(Glu) in a two-step reaction: glutamate is first activated by ATP to form Glu-AMP and then transferred to the acceptor end of tRNA(Glu). The chain is Glutamate--tRNA ligase 1 from Bartonella tribocorum (strain CIP 105476 / IBS 506).